The primary structure comprises 66 residues: Large ribosomal subunit protein bL35 (66 aa).

It belongs to the bacterial ribosomal protein bL35 family.

In Synechococcus sp. (strain RCC307), this protein is Large ribosomal subunit protein bL35.